The following is a 547-amino-acid chain: MARFIFITGGVVSSLGKGLASAALGALLQARGFSVRLRKLDPYLNVDPGTMSPFEHGEVFVTDDGAETDLDLGHYERFTGVAARKTDSVSSGRIYSNVLEKERRGDYLGKTIQVIPHVTNEIKDFISIGEDEVDFMLCEIGGTVGDIEGLPFFEAIRQFSQDKPRGQCIFMHLTLLPYIKASGELKTKPTQHSVKELRSIGLAPDILVCRSEGPIPQKEREKLALFCNVRPDSVIAAQDLSTIYDAPLAYHREGLDQAVLDAFQISPAPKPDLTKWEDVSDRVHNPEGEVKIAIVGKYVQLEDAYKSIAEALTHGGMANRVKVRIEWVDAEIFEKEDPAPHLEGFHAILVPGGFGERGTEGKIKAAQYAREHQVPYLGICLGMQMAVIEAARNVAGIAGAGSEEFDHEAGKKRFEPVVYHLKEWVQGNYKVSRKVDDDKGGTMRLGAYDAVLKEGSRVAEVYGGTAIEERHRHRYEVDIKYREQLEKAGLCFSGMSPDGRLPEIVEWTDHPWFIGVQYHPELKSKPFDPHPLFADFVRAAKESSRLV.

The tract at residues 1–265 (MARFIFITGG…DQAVLDAFQI (265 aa)) is amidoligase domain. Position 13 (Ser-13) interacts with CTP. A UTP-binding site is contributed by Ser-13. ATP contacts are provided by residues 14 to 19 (SLGKGL) and Asp-71. Mg(2+) is bound by residues Asp-71 and Glu-139. CTP-binding positions include 146–148 (DIE), 186–191 (KTKPTQ), and Lys-222. Residues 186-191 (KTKPTQ) and Lys-222 each bind UTP. Residues 291 to 546 (KIAIVGKYVQ…VRAAKESSRL (256 aa)) enclose the Glutamine amidotransferase type-1 domain. An L-glutamine-binding site is contributed by Gly-353. The active-site Nucleophile; for glutamine hydrolysis is the Cys-380. L-glutamine-binding positions include 381–384 (LGMQ), Glu-404, and Arg-474. Active-site residues include His-519 and Glu-521.

It belongs to the CTP synthase family. Homotetramer.

It catalyses the reaction UTP + L-glutamine + ATP + H2O = CTP + L-glutamate + ADP + phosphate + 2 H(+). The catalysed reaction is L-glutamine + H2O = L-glutamate + NH4(+). The enzyme catalyses UTP + NH4(+) + ATP = CTP + ADP + phosphate + 2 H(+). It participates in pyrimidine metabolism; CTP biosynthesis via de novo pathway; CTP from UDP: step 2/2. Allosterically activated by GTP, when glutamine is the substrate; GTP has no effect on the reaction when ammonia is the substrate. The allosteric effector GTP functions by stabilizing the protein conformation that binds the tetrahedral intermediate(s) formed during glutamine hydrolysis. Inhibited by the product CTP, via allosteric rather than competitive inhibition. Catalyzes the ATP-dependent amination of UTP to CTP with either L-glutamine or ammonia as the source of nitrogen. Regulates intracellular CTP levels through interactions with the four ribonucleotide triphosphates. This chain is CTP synthase, found in Ruegeria pomeroyi (strain ATCC 700808 / DSM 15171 / DSS-3) (Silicibacter pomeroyi).